We begin with the raw amino-acid sequence, 558 residues long: uncharacterized protein (558 aa).

6 helical membrane passes run 63–83, 90–110, 143–163, 168–188, 226–246, and 258–278; these read LTGI…PSIY, VTFG…TYWI, VAAV…TLYG, VFVT…ATNC, SLGS…VLLV, and VLIL…ILAW. Residues 279–330 form the HAMP domain; the sequence is LTAAPVRVVRAALKRVEQGDLRGDLVVFDGTELGELQRGFNAMVNGLRERER. The 125-residue stretch at 362-486 folds into the Guanylate cyclase domain; the sequence is AVVFVDIVGS…KPVNQAARLC (125 aa). Residues 529–558 form a disordered region; the sequence is TQLASPHRRPPGSIHLTAEHAEEIRTDRLG. Over residues 545–558 the composition is skewed to basic and acidic residues; it reads TAEHAEEIRTDRLG.

The protein belongs to the adenylyl cyclase class-3 family.

The protein localises to the cell membrane. This is an uncharacterized protein from Mycobacterium tuberculosis (strain CDC 1551 / Oshkosh).